A 144-amino-acid polypeptide reads, in one-letter code: Maximins 7/H1 (144 aa).

The signal sequence occupies residues 1-18 (MNFKYIVAVSFLIASAYA). The propeptide occupies 19–43 (RSEENDEQSLSQRDVLEEESLREIR). Asparagine amide is present on Asn70. Residues 74–123 (TAEDHEVMKRLEAVMRDLDSLDYPEEAAERETRGFNQEEIANLFTKKEKR) constitute a propeptide that is removed on maturation. Leucine amide is present on Leu143.

Belongs to the bombinin family. As to expression, expressed by the skin glands.

The protein localises to the secreted. Its function is as follows. Maximin-7 shows antimicrobial activity against bacteria and against the fungus C.albicans. It has little hemolytic activity. Functionally, maximin-H1 shows antibacterial activity against both Gram-positive and Gram-negative bacteria. It also shows antimicrobial activity against the fungus C.albicans. Shows strong hemolytic activity. The protein is Maximins 7/H1 of Bombina maxima (Giant fire-bellied toad).